The chain runs to 335 residues: Acetyl-coenzyme A carboxylase carboxyl transferase subunit alpha (335 aa).

Positions 38 to 292 (TLEQKAEELR…ATALSEEIEN (255 aa)) constitute a CoA carboxyltransferase C-terminal domain.

This sequence belongs to the AccA family. As to quaternary structure, acetyl-CoA carboxylase is a heterohexamer composed of biotin carboxyl carrier protein (AccB), biotin carboxylase (AccC) and two subunits each of ACCase subunit alpha (AccA) and ACCase subunit beta (AccD).

The protein localises to the cytoplasm. It catalyses the reaction N(6)-carboxybiotinyl-L-lysyl-[protein] + acetyl-CoA = N(6)-biotinyl-L-lysyl-[protein] + malonyl-CoA. The protein operates within lipid metabolism; malonyl-CoA biosynthesis; malonyl-CoA from acetyl-CoA: step 1/1. Functionally, component of the acetyl coenzyme A carboxylase (ACC) complex. First, biotin carboxylase catalyzes the carboxylation of biotin on its carrier protein (BCCP) and then the CO(2) group is transferred by the carboxyltransferase to acetyl-CoA to form malonyl-CoA. The sequence is that of Acetyl-coenzyme A carboxylase carboxyl transferase subunit alpha from Heliobacterium modesticaldum (strain ATCC 51547 / Ice1).